Consider the following 427-residue polypeptide: 3-phosphoshikimate 1-carboxyvinyltransferase (427 aa).

Residues Lys23, Ser24, and Arg28 each contribute to the 3-phosphoshikimate site. Lys23 lines the phosphoenolpyruvate pocket. Gly97 and Arg125 together coordinate phosphoenolpyruvate. The 3-phosphoshikimate site is built by Ser169, Ser170, Gln171, Ser197, Asp313, Asn336, and Lys340. Phosphoenolpyruvate is bound at residue Gln171. Asp313 serves as the catalytic Proton acceptor. Arg344, Arg386, and Lys411 together coordinate phosphoenolpyruvate.

This sequence belongs to the EPSP synthase family. In terms of assembly, monomer.

The protein resides in the cytoplasm. The enzyme catalyses 3-phosphoshikimate + phosphoenolpyruvate = 5-O-(1-carboxyvinyl)-3-phosphoshikimate + phosphate. Its pathway is metabolic intermediate biosynthesis; chorismate biosynthesis; chorismate from D-erythrose 4-phosphate and phosphoenolpyruvate: step 6/7. Its function is as follows. Catalyzes the transfer of the enolpyruvyl moiety of phosphoenolpyruvate (PEP) to the 5-hydroxyl of shikimate-3-phosphate (S3P) to produce enolpyruvyl shikimate-3-phosphate and inorganic phosphate. The polypeptide is 3-phosphoshikimate 1-carboxyvinyltransferase (Yersinia ruckeri).